Consider the following 293-residue polypeptide: N-acetylneuraminate lyase (293 aa).

Positions 47, 48, and 136 each coordinate aceneuramate. The Proton donor role is filled by tyrosine 136. Lysine 164 (schiff-base intermediate with substrate) is an active-site residue. Positions 166, 188, 190, 191, 207, and 251 each coordinate aceneuramate.

The protein belongs to the DapA family. NanA subfamily. Homotetramer.

It is found in the cytoplasm. It carries out the reaction aceneuramate = aldehydo-N-acetyl-D-mannosamine + pyruvate. Its pathway is amino-sugar metabolism; N-acetylneuraminate degradation; D-fructose 6-phosphate from N-acetylneuraminate: step 1/5. Catalyzes the reversible aldol cleavage of N-acetylneuraminic acid (sialic acid; Neu5Ac) to form pyruvate and N-acetylmannosamine (ManNAc) via a Schiff base intermediate. The polypeptide is N-acetylneuraminate lyase (Pasteurella multocida (strain Pm70)).